A 465-amino-acid polypeptide reads, in one-letter code: Uridine kinase-like protein 5 (465 aa).

The segment at 26 to 230 is uridine kinase; it reads LKQPFVIGVA…IVQHIRTKLC (205 aa). A uracil phosphoribosyltransferase region spans residues 240–465; it reads NIFIISSTFQ…SLSTNLKLRS (226 aa). GTP-binding positions include K264, R273, and 307-310; that span reads CKRL. The 5-phospho-alpha-D-ribose 1-diphosphate site is built by R317 and R342. Residue R362 coordinates GTP. 5-phospho-alpha-D-ribose 1-diphosphate contacts are provided by residues D368, 373–376, and E439; that span reads SGYS. 438–440 lines the uracil pocket; sequence GEF.

This sequence in the N-terminal section; belongs to the uridine kinase family. It in the C-terminal section; belongs to the UPRTase family. The cofactor is Mg(2+).

It carries out the reaction UMP + diphosphate = 5-phospho-alpha-D-ribose 1-diphosphate + uracil. The catalysed reaction is cytidine + ATP = CMP + ADP + H(+). It catalyses the reaction uridine + ATP = UMP + ADP + H(+). It participates in pyrimidine metabolism; UMP biosynthesis via salvage pathway; UMP from uracil: step 1/1. It functions in the pathway pyrimidine metabolism; CTP biosynthesis via salvage pathway; CTP from cytidine: step 1/3. The protein operates within pyrimidine metabolism; UMP biosynthesis via salvage pathway; UMP from uridine: step 1/1. Allosterically activated by GTP. In terms of biological role, involved in the pyrimidine salvage pathway. This chain is Uridine kinase-like protein 5 (UKL5), found in Arabidopsis thaliana (Mouse-ear cress).